Consider the following 1446-residue polypeptide: ABC transporter G family member 53 (1446 aa).

The region spanning 153-426 (ANTLHITPNR…FESVGFKCPE (274 aa)) is the ABC transporter 1 domain. 186 to 193 (GPPGAGKT) contributes to the ATP binding site. The ABC transmembrane type-2 1 domain maps to 504–717 (ELLKANIDRE…AQNAISVNEF (214 aa)). Transmembrane regions (helical) follow at residues 523–543 (VYIF…TVFI), 555–575 (GGIY…NGLA), 610–630 (TPLS…VIGF), 641–661 (FLLL…IAGF), 666–686 (VVAS…GGFI), and 752–772 (IGVG…TICL). Residues 849–1101 (ITFEDIRYSV…ELIRYFESIE (253 aa)) enclose the ABC transporter 2 domain. 894–901 (GVSGAGKT) contributes to the ATP binding site. One can recognise an ABC transmembrane type-2 2 domain in the interval 1174-1388 (TQCLACLWKQ…TLYGLVTSQF (215 aa)). Helical transmembrane passes span 1195-1215 (AVKY…FWGV), 1225-1242 (LFNA…MGVQ), 1281-1301 (LPYI…MIGF), 1308-1328 (FFWY…YGMM), 1338-1358 (VASV…GFII), 1363-1383 (IPIW…LYGL), and 1415-1435 (FLWV…FLFG).

This sequence belongs to the ABC transporter superfamily. ABCG family. PDR (TC 3.A.1.205) subfamily.

The protein localises to the membrane. May be a general defense protein. The sequence is that of ABC transporter G family member 53 from Oryza sativa subsp. japonica (Rice).